The primary structure comprises 559 residues: NAD(P)H-quinone oxidoreductase chain 4-2 (559 aa).

14 consecutive transmembrane segments (helical) span residues 5 to 25 (FPWL…IPLI), 35 to 55 (WYAL…FWTN), 86 to 106 (ISMP…FAAW), 114 to 134 (LFYF…VAQD), 136 to 156 (LLLF…VCIW), 168 to 188 (FLLY…GLAF), 207 to 227 (IALE…KLAI), 242 to 262 (SAPV…YGLI), 274 to 294 (VYFA…GGFS), 310 to 330 (VSHM…GISG), 331 to 351 (AMLQ…LAGV), 374 to 394 (VFAL…MSGF), 417 to 437 (VTVF…LSML), and 488 to 508 (VFIA…PKLA).

This sequence belongs to the complex I subunit 4 family.

The protein localises to the cellular thylakoid membrane. The catalysed reaction is a plastoquinone + NADH + (n+1) H(+)(in) = a plastoquinol + NAD(+) + n H(+)(out). It carries out the reaction a plastoquinone + NADPH + (n+1) H(+)(in) = a plastoquinol + NADP(+) + n H(+)(out). Its function is as follows. NDH-1 shuttles electrons from NAD(P)H, via FMN and iron-sulfur (Fe-S) centers, to quinones in the respiratory chain. The immediate electron acceptor for the enzyme in this species is believed to be plastoquinone. Couples the redox reaction to proton translocation (for every two electrons transferred, four hydrogen ions are translocated across the cytoplasmic membrane), and thus conserves the redox energy in a proton gradient. The polypeptide is NAD(P)H-quinone oxidoreductase chain 4-2 (ndhD2) (Synechocystis sp. (strain ATCC 27184 / PCC 6803 / Kazusa)).